The following is a 437-amino-acid chain: Perilipin-2 (437 aa).

Residue Ala2 is modified to N-acetylalanine. Ser215 is subject to Phosphoserine. The residue at position 232 (Tyr232) is a Phosphotyrosine. The disordered stretch occupies residues 412–437; it reads SQNAQDQGAEMDKSSQETQRSEHKTH. The segment covering 421-437 has biased composition (basic and acidic residues); that stretch reads EMDKSSQETQRSEHKTH.

The protein belongs to the perilipin family. Interacts with IRGC. In terms of processing, acylated; primarily with C14, C16 and C18 fatty acids. Phosphorylation at Tyr-232 by isoform 1 of CHKA (CHKalpha2) promotes dissociation from lipid droplets: dissociation is followed by recruitment of autophagosome machinery to lipid droplets and subsequent lipid droplet lipolysis. Post-translationally, polyubiquitination of Nt-acetylatable A-PLIN2 by MARCHF6 lead to degradation by 26S proteasomes. Milk lipid globules.

The protein resides in the membrane. The protein localises to the lipid droplet. In terms of biological role, structural component of lipid droplets, which is required for the formation and maintenance of lipid storage droplets. This chain is Perilipin-2, found in Homo sapiens (Human).